Consider the following 248-residue polypeptide: ATP synthase subunit a, chloroplastic (248 aa).

Transmembrane regions (helical) follow at residues 35–55, 94–114, 133–153, 202–222, and 224–244; these read GQVF…SFLG, VPYI…GALI, INTT…AGLS, VFTL…GLFA, and SIQA…AMEG.

It belongs to the ATPase A chain family. In terms of assembly, F-type ATPases have 2 components, CF(1) - the catalytic core - and CF(0) - the membrane proton channel. CF(1) has five subunits: alpha(3), beta(3), gamma(1), delta(1), epsilon(1). CF(0) has four main subunits: a, b, b' and c.

Its subcellular location is the plastid. It localises to the chloroplast thylakoid membrane. In terms of biological role, key component of the proton channel; it plays a direct role in the translocation of protons across the membrane. This Pyropia yezoensis (Susabi-nori) protein is ATP synthase subunit a, chloroplastic.